The sequence spans 199 residues: Large ribosomal subunit protein bL9 (199 aa).

Residues 169-199 are disordered; that stretch reads TGGFTEEYDPNAEPGEIPTELLEGGEEAAEA.

This sequence belongs to the bacterial ribosomal protein bL9 family.

Binds to the 23S rRNA. In Novosphingobium aromaticivorans (strain ATCC 700278 / DSM 12444 / CCUG 56034 / CIP 105152 / NBRC 16084 / F199), this protein is Large ribosomal subunit protein bL9.